Here is a 360-residue protein sequence, read N- to C-terminus: Phospho-N-acetylmuramoyl-pentapeptide-transferase (360 aa).

A run of 10 helical transmembrane segments spans residues 21–41 (YITF…LWIG), 73–93 (TMGG…WADL), 98–118 (VWFV…DDYW), 132–152 (WKYF…YAIG), 168–188 (VMPQ…VGTS), 199–219 (GLAI…AWAT), 236–256 (SGEL…FLWF), 263–283 (VFMG…IAVL), 288–308 (LLLV…ILQV), and 338–358 (VIVR…VTLK).

It belongs to the glycosyltransferase 4 family. MraY subfamily. It depends on Mg(2+) as a cofactor.

Its subcellular location is the cell inner membrane. It catalyses the reaction UDP-N-acetyl-alpha-D-muramoyl-L-alanyl-gamma-D-glutamyl-meso-2,6-diaminopimeloyl-D-alanyl-D-alanine + di-trans,octa-cis-undecaprenyl phosphate = di-trans,octa-cis-undecaprenyl diphospho-N-acetyl-alpha-D-muramoyl-L-alanyl-D-glutamyl-meso-2,6-diaminopimeloyl-D-alanyl-D-alanine + UMP. It functions in the pathway cell wall biogenesis; peptidoglycan biosynthesis. Catalyzes the initial step of the lipid cycle reactions in the biosynthesis of the cell wall peptidoglycan: transfers peptidoglycan precursor phospho-MurNAc-pentapeptide from UDP-MurNAc-pentapeptide onto the lipid carrier undecaprenyl phosphate, yielding undecaprenyl-pyrophosphoryl-MurNAc-pentapeptide, known as lipid I. In Glaesserella parasuis serovar 5 (strain SH0165) (Haemophilus parasuis), this protein is Phospho-N-acetylmuramoyl-pentapeptide-transferase.